We begin with the raw amino-acid sequence, 241 residues long: MMSSKPIYKRVLLKASGEALMGDQGFGIDVAVADRIASDIAEARAMGVEVGVVVGGGNIFRGVAVASKGGDRVTGDHMGMLATVINALALATSLRKLSIDTVVLSAIAMPEICESFSQRAALHHLAQGRVVIFAGGTGNPFFTTDSAAALRAAEMGAEAIFKGTQVDGIYSADPKKDPTATRFDELTHSEVLGKGLAVMDIAAVALARENHIPIIVFSIHEKGGFAQILTGGGRKTIVHDK.

Residue 14 to 17 (KASG) participates in ATP binding. An involved in allosteric activation by GTP region spans residues 22 to 27 (GDQGFG). Position 56 (glycine 56) interacts with UMP. Residues glycine 57 and arginine 61 each coordinate ATP. Residues aspartate 76 and 137–144 (TGNPFFTT) contribute to the UMP site. Threonine 164, glutamine 165, tyrosine 170, and aspartate 173 together coordinate ATP.

This sequence belongs to the UMP kinase family. In terms of assembly, homohexamer.

Its subcellular location is the cytoplasm. It catalyses the reaction UMP + ATP = UDP + ADP. The protein operates within pyrimidine metabolism; CTP biosynthesis via de novo pathway; UDP from UMP (UMPK route): step 1/1. Its activity is regulated as follows. Allosterically activated by GTP. Inhibited by UTP. Catalyzes the reversible phosphorylation of UMP to UDP. This is Uridylate kinase from Agrobacterium fabrum (strain C58 / ATCC 33970) (Agrobacterium tumefaciens (strain C58)).